Reading from the N-terminus, the 303-residue chain is Glutamyl-Q tRNA(Asp) synthetase (303 aa).

L-glutamate is bound by residues 9–13 (RFAPS) and Glu45. The 'HIGH' region signature appears at 12–22 (PSPTGAMHLGN). 4 residues coordinate Zn(2+): Cys100, Cys102, Tyr125, and Cys129. The L-glutamate site is built by Tyr184 and Arg202. Residues 240-244 (RLAKR) carry the 'KMSKS' region motif. Lys243 contributes to the ATP binding site.

Belongs to the class-I aminoacyl-tRNA synthetase family. GluQ subfamily. The cofactor is Zn(2+).

In terms of biological role, catalyzes the tRNA-independent activation of glutamate in presence of ATP and the subsequent transfer of glutamate onto a tRNA(Asp). Glutamate is transferred on the 2-amino-5-(4,5-dihydroxy-2-cyclopenten-1-yl) moiety of the queuosine in the wobble position of the QUC anticodon. This chain is Glutamyl-Q tRNA(Asp) synthetase, found in Deinococcus geothermalis (strain DSM 11300 / CIP 105573 / AG-3a).